Reading from the N-terminus, the 713-residue chain is MTAEPNKPCQIKRDYQQLINLYPATADTDAHYLSKLSIYQQRVFEAHSQQKLLILGQIGLGNGLELLSWWRTQANPSQRLLLKVFEPNPINAYELKSLWDQSLALVKETPFEPHLESKQASALECKPELSQLAQTLLDAEPTAIIGCQRLIFDDGRTTIDLHFGDIQTQLSSLSHSPMHPVQHWLILPHLLQALHHQSHWQMAKLSDDSATIATIGLSESSGLSETTVKRFQACGFTVSDINELATKALGINALGIHQPVTLINHQPDAVLLHERQVLRQQDVKAYAFNPMAAILSSATPSSIAIIGGGLASAHLALSLAERGQGAQVFCKDAELGQGASGNRQGAIYPLLTPENDELSRFFQQAFLFSRRRVQALTSAPAVNQTSISHDFCGVLQTAHDERSQLRLDKIIQGQPWPSEIAYAVDAEQANAIAKINLDKPGFFYPLGGWVCPFEYADAAIQKAMQLADVSVSLNTDILAIERQADGWVLLTEKERFGPFAQLVLANGAELTQFDASNKLQISPFRGQVSHVPAQFQLSQLATVLCANGYLTPSHQGLHCLGASYVKEPEHLDFCPQEQQENLMKMHESYPDHSWLEDIDMSGNNARVGVRMVTRDHFPMMGCAPDVPKILKDYEQHQLTKESRHYWQTTPAPLHQGLYILGGLGSRGLSSGPLAAECLAAQLCGEPIPLDKETLCKLNPNRMWLRKLLKGKAL.

The interval 1–300 is tRNA (mnm(5)s(2)U34)-methyltransferase; it reads MTAEPNKPCQ…MAAILSSATP (300 aa). The segment at 306-713 is FAD-dependent cmnm(5)s(2)U34 oxidoreductase; the sequence is IGGGLASAHL…LRKLLKGKAL (408 aa).

It in the N-terminal section; belongs to the methyltransferase superfamily. tRNA (mnm(5)s(2)U34)-methyltransferase family. The protein in the C-terminal section; belongs to the DAO family. FAD is required as a cofactor.

It is found in the cytoplasm. The catalysed reaction is 5-aminomethyl-2-thiouridine(34) in tRNA + S-adenosyl-L-methionine = 5-methylaminomethyl-2-thiouridine(34) in tRNA + S-adenosyl-L-homocysteine + H(+). Functionally, catalyzes the last two steps in the biosynthesis of 5-methylaminomethyl-2-thiouridine (mnm(5)s(2)U) at the wobble position (U34) in tRNA. Catalyzes the FAD-dependent demodification of cmnm(5)s(2)U34 to nm(5)s(2)U34, followed by the transfer of a methyl group from S-adenosyl-L-methionine to nm(5)s(2)U34, to form mnm(5)s(2)U34. This Shewanella baltica (strain OS155 / ATCC BAA-1091) protein is tRNA 5-methylaminomethyl-2-thiouridine biosynthesis bifunctional protein MnmC.